Consider the following 230-residue polypeptide: Large ribosomal subunit protein uL1 (230 aa).

Belongs to the universal ribosomal protein uL1 family. As to quaternary structure, part of the 50S ribosomal subunit.

In terms of biological role, binds directly to 23S rRNA. The L1 stalk is quite mobile in the ribosome, and is involved in E site tRNA release. Its function is as follows. Protein L1 is also a translational repressor protein, it controls the translation of the L11 operon by binding to its mRNA. The protein is Large ribosomal subunit protein uL1 of Aster yellows witches'-broom phytoplasma (strain AYWB).